Consider the following 344-residue polypeptide: Fructose-1,6-bisphosphatase class 1 (344 aa).

Mg(2+) contacts are provided by Glu-91, Asp-110, Leu-112, and Asp-113. Substrate is bound by residues 113 to 116 and Asn-200; that span reads DGSS. A Mg(2+)-binding site is contributed by Glu-272.

It belongs to the FBPase class 1 family. Homotetramer. The cofactor is Mg(2+).

It is found in the cytoplasm. The catalysed reaction is beta-D-fructose 1,6-bisphosphate + H2O = beta-D-fructose 6-phosphate + phosphate. It functions in the pathway carbohydrate biosynthesis; Calvin cycle. The sequence is that of Fructose-1,6-bisphosphatase class 1 from Rhodopseudomonas palustris (strain BisA53).